A 242-amino-acid chain; its full sequence is MTYLLIDNSNTRTKFVLSSPEALLPERYMVPTREVSGERLDEVLAGVRYDAAVVCSVVPRVAEELKNWIVKPCHFLSCDSRLGVGIDYPHPRQIGADRLANAVGAAAYYGYPCVVVDFGTAVTFDVIGPQCTYMGGVIAPGLASMGDYLERNTALLPAIDPQEPSRVIGTSTVEAMQSGAVYGYRGLVKEILARLEGELGVRPAVVATGGDAALIARGVERIDHVDPDITLNGLRIAAGLNL.

7-14 (DNSNTRTK) lines the ATP pocket. Substrate-binding positions include Tyr-88 and 95 to 98 (GADR). Catalysis depends on Asp-97, which acts as the Proton acceptor. K(+) is bound at residue Asp-117. An ATP-binding site is contributed by Thr-120. Thr-172 serves as a coordination point for substrate.

Belongs to the type III pantothenate kinase family. As to quaternary structure, homodimer. NH4(+) is required as a cofactor. The cofactor is K(+).

It is found in the cytoplasm. It carries out the reaction (R)-pantothenate + ATP = (R)-4'-phosphopantothenate + ADP + H(+). The protein operates within cofactor biosynthesis; coenzyme A biosynthesis; CoA from (R)-pantothenate: step 1/5. Its function is as follows. Catalyzes the phosphorylation of pantothenate (Pan), the first step in CoA biosynthesis. The protein is Type III pantothenate kinase of Akkermansia muciniphila (strain ATCC BAA-835 / DSM 22959 / JCM 33894 / BCRC 81048 / CCUG 64013 / CIP 107961 / Muc).